Here is a 274-residue protein sequence, read N- to C-terminus: Nickel/cobalt efflux system RcnA (274 aa).

Residues 1–12 (MTEFTTLLQQGN) are Periplasmic-facing. The chain crosses the membrane as a helical span at residues 13–33 (AWFFIPSAILLGALHGLEPGH). Topologically, residues 34-56 (SKTMMAAFIIAIKGTIKQAVMLG) are cytoplasmic. A helical transmembrane segment spans residues 57 to 77 (LAATISHTAVVWLIAFGGMVI). Topologically, residues 78–86 (SKRFTAQSA) are periplasmic. Residues 87–107 (EPWLQLISAVIIISTAFWMFW) form a helical membrane-spanning segment. The Cytoplasmic portion of the chain corresponds to 108-175 (RTWRGERNWL…DGREVTNWQI (68 aa)). Residues 127–153 (HHHHDHEHHHDHGHHHHHEHGEYQDAH) are disordered. Residues 129–144 (HHDHEHHHDHGHHHHH) show a composition bias toward basic residues. The chain crosses the membrane as a helical span at residues 176–196 (LLFGLTGGLIPCPAAITVLLI). Over 197–209 (CIQLKALTLGATL) the chain is Periplasmic. A helical membrane pass occupies residues 210-230 (VVSFSIGLALTLVTVGVGAAI). At 231 to 251 (SVQQVAKRWSGFNTLAKRAPY) the chain is on the cytoplasmic side. The helical transmembrane segment at 252-272 (FSSLLIGLVGVYMGVHGFMGI) threads the bilayer. Topologically, residues 273-274 (MR) are periplasmic.

This sequence belongs to the NiCoT transporter (TC 2.A.52) family. RcnA subfamily.

The protein localises to the cell inner membrane. Functionally, efflux system for nickel and cobalt. The protein is Nickel/cobalt efflux system RcnA (rcnA) of Escherichia coli (strain K12).